Consider the following 173-residue polypeptide: Bifunctional protein PyrR (173 aa).

Positions 93–105 match the PRPP-binding motif; that stretch reads VILIDDVLYTGRT.

It belongs to the purine/pyrimidine phosphoribosyltransferase family. PyrR subfamily. Homodimer and homohexamer; in equilibrium.

The catalysed reaction is UMP + diphosphate = 5-phospho-alpha-D-ribose 1-diphosphate + uracil. Regulates transcriptional attenuation of the pyrimidine nucleotide (pyr) operon by binding in a uridine-dependent manner to specific sites on pyr mRNA. This disrupts an antiterminator hairpin in the RNA and favors formation of a downstream transcription terminator, leading to a reduced expression of downstream genes. Functionally, also displays a weak uracil phosphoribosyltransferase activity which is not physiologically significant. The chain is Bifunctional protein PyrR from Streptococcus pyogenes serotype M12 (strain MGAS2096).